Consider the following 338-residue polypeptide: Toxin coregulated pilus biosynthesis protein F (338 aa).

A signal peptide spans 1–20 (MRYKKTLMLSIMITSFNSFA).

The protein localises to the cell outer membrane. Involved in TCP pilus biogenesis. May be a channel protein. The sequence is that of Toxin coregulated pilus biosynthesis protein F (tcpF) from Vibrio cholerae serotype O1 (strain ATCC 39541 / Classical Ogawa 395 / O395).